Here is a 565-residue protein sequence, read N- to C-terminus: Dihydroxy-acid dehydratase (565 aa).

Cys-50 contributes to the [2Fe-2S] cluster binding site. Asp-82 contacts Mg(2+). [2Fe-2S] cluster is bound at residue Cys-123. Asp-124 and Lys-125 together coordinate Mg(2+). Position 125 is an N6-carboxylysine (Lys-125). A [2Fe-2S] cluster-binding site is contributed by Cys-195. Glu-447 lines the Mg(2+) pocket. Ser-473 (proton acceptor) is an active-site residue.

It belongs to the IlvD/Edd family. Homodimer. [2Fe-2S] cluster serves as cofactor. It depends on Mg(2+) as a cofactor.

It carries out the reaction (2R)-2,3-dihydroxy-3-methylbutanoate = 3-methyl-2-oxobutanoate + H2O. The enzyme catalyses (2R,3R)-2,3-dihydroxy-3-methylpentanoate = (S)-3-methyl-2-oxopentanoate + H2O. Its pathway is amino-acid biosynthesis; L-isoleucine biosynthesis; L-isoleucine from 2-oxobutanoate: step 3/4. It functions in the pathway amino-acid biosynthesis; L-valine biosynthesis; L-valine from pyruvate: step 3/4. Functionally, functions in the biosynthesis of branched-chain amino acids. Catalyzes the dehydration of (2R,3R)-2,3-dihydroxy-3-methylpentanoate (2,3-dihydroxy-3-methylvalerate) into 2-oxo-3-methylpentanoate (2-oxo-3-methylvalerate) and of (2R)-2,3-dihydroxy-3-methylbutanoate (2,3-dihydroxyisovalerate) into 2-oxo-3-methylbutanoate (2-oxoisovalerate), the penultimate precursor to L-isoleucine and L-valine, respectively. The polypeptide is Dihydroxy-acid dehydratase (Halorhodospira halophila (strain DSM 244 / SL1) (Ectothiorhodospira halophila (strain DSM 244 / SL1))).